Consider the following 328-residue polypeptide: Ribose-phosphate pyrophosphokinase (328 aa).

ATP-binding positions include 39 to 41 and 98 to 99; these read DGE and RQ. Mg(2+) contacts are provided by His-132 and Asp-172. Lys-195 is an active-site residue. Residues Arg-197, Asp-221, and 225-229 contribute to the D-ribose 5-phosphate site; that span reads DTGGT.

Belongs to the ribose-phosphate pyrophosphokinase family. Class I subfamily. As to quaternary structure, homohexamer. The cofactor is Mg(2+).

It localises to the cytoplasm. The enzyme catalyses D-ribose 5-phosphate + ATP = 5-phospho-alpha-D-ribose 1-diphosphate + AMP + H(+). It functions in the pathway metabolic intermediate biosynthesis; 5-phospho-alpha-D-ribose 1-diphosphate biosynthesis; 5-phospho-alpha-D-ribose 1-diphosphate from D-ribose 5-phosphate (route I): step 1/1. Its function is as follows. Involved in the biosynthesis of the central metabolite phospho-alpha-D-ribosyl-1-pyrophosphate (PRPP) via the transfer of pyrophosphoryl group from ATP to 1-hydroxyl of ribose-5-phosphate (Rib-5-P). The protein is Ribose-phosphate pyrophosphokinase of Mycoplasma pneumoniae (strain ATCC 29342 / M129 / Subtype 1) (Mycoplasmoides pneumoniae).